We begin with the raw amino-acid sequence, 210 residues long: N-(5'-phosphoribosyl)anthranilate isomerase (210 aa).

Belongs to the TrpF family.

It carries out the reaction N-(5-phospho-beta-D-ribosyl)anthranilate = 1-(2-carboxyphenylamino)-1-deoxy-D-ribulose 5-phosphate. The protein operates within amino-acid biosynthesis; L-tryptophan biosynthesis; L-tryptophan from chorismate: step 3/5. The polypeptide is N-(5'-phosphoribosyl)anthranilate isomerase (Pseudomonas fluorescens (strain SBW25)).